Here is a 478-residue protein sequence, read N- to C-terminus: Transposase for insertion sequence element IS231B (478 aa).

Belongs to the transposase 11 family.

Its function is as follows. Involved in the transposition of the insertion sequence. This Bacillus thuringiensis subsp. berliner protein is Transposase for insertion sequence element IS231B.